A 301-amino-acid polypeptide reads, in one-letter code: NADH-cytochrome b5 reductase 3 (301 aa).

Gly2 is lipidated: N-myristoyl glycine. Residues 40-152 (DIKYPLRLID…RGPNGLLVYQ (113 aa)) form the FAD-binding FR-type domain. Lys42 carries the N6-acetyllysine modification. Phosphotyrosine is present on Tyr43. Residue Lys50 is modified to N6-acetyllysine. FAD is bound by residues Arg92, Pro93, Tyr94, Val109, Lys111, and Phe114. Lys120 bears the N6-acetyllysine mark. FAD-binding residues include Lys126, Met127, Ser128, and Thr185.

The protein belongs to the flavoprotein pyridine nucleotide cytochrome reductase family. In terms of assembly, component of a complex composed of cytochrome b5, NADH-cytochrome b5 reductase (CYB5R3) and MTARC2. Interacts with MTLN; the interaction is required to maintain cellular lipid composition and leads to stimulation of mitochondrial respiratory complex I activity. It depends on FAD as a cofactor.

Its subcellular location is the endoplasmic reticulum membrane. The protein resides in the mitochondrion outer membrane. It catalyses the reaction 2 Fe(III)-[cytochrome b5] + NADH = 2 Fe(II)-[cytochrome b5] + NAD(+) + H(+). Its function is as follows. Catalyzes the reduction of two molecules of cytochrome b5 using NADH as the electron donor. This chain is NADH-cytochrome b5 reductase 3 (CYB5R3), found in Bos taurus (Bovine).